A 262-amino-acid chain; its full sequence is Small ribosomal subunit protein mS23 (262 aa).

Residues 211–262 are disordered; it reads SGQSDEAPEGEGSDMSAGEYDMAVEELAGQGSIPNTPQSTVVPEGTSAPAHA. A compositionally biased stretch (polar residues) spans 242 to 251; it reads SIPNTPQSTV.

This sequence belongs to the mitochondrion-specific ribosomal protein mS23 family. As to quaternary structure, component of the mitochondrial small ribosomal subunit.

It localises to the mitochondrion. This Phaeosphaeria nodorum (strain SN15 / ATCC MYA-4574 / FGSC 10173) (Glume blotch fungus) protein is Small ribosomal subunit protein mS23 (RSM25).